A 185-amino-acid polypeptide reads, in one-letter code: Ribosome-recycling factor (185 aa).

Belongs to the RRF family.

The protein resides in the cytoplasm. In terms of biological role, responsible for the release of ribosomes from messenger RNA at the termination of protein biosynthesis. May increase the efficiency of translation by recycling ribosomes from one round of translation to another. The chain is Ribosome-recycling factor from Clostridium kluyveri (strain NBRC 12016).